We begin with the raw amino-acid sequence, 1340 residues long: Pleckstrin homology domain-containing family G member 2 (1340 aa).

A compositionally biased stretch (polar residues) spans 34 to 44; sequence TPTAQAATTMA. The interval 34–76 is disordered; sequence TPTAQAATTMASPRGSGSSTSLSTVGSEGDPSPACSASRPEPL. The span at 45–62 shows a compositional bias: low complexity; it reads SPRGSGSSTSLSTVGSEG. Residues 98–279 form the DH domain; it reads RLERVAREIV…TAVAWYINDM (182 aa). The region spanning 309-407 is the PH domain; it reads ELVLEGTFRG…WIHCLQRLFF (99 aa). Disordered stretches follow at residues 431–623, 684–743, 820–855, 907–979, 991–1028, 1047–1069, and 1125–1146; these read PKSK…IPCI, LPGP…SVQG, MQRA…EAEP, NVSD…PSAG, TTSL…EQRD, PVCT…STDF, and PLSS…SLTD. Thr441 is modified (phosphothreonine). Phosphoserine occurs at positions 446 and 465. A compositionally biased stretch (basic and acidic residues) spans 560–572; the sequence is DIPKFPRDSRVPV. Over residues 588 to 600 the composition is skewed to acidic residues; sequence SEEEEEEDLETDE. 5 stretches are compositionally biased toward polar residues: residues 703-714, 820-831, 907-921, 930-945, and 956-972; these read SGSNPGRLSESP, MQRAETRASTNA, NVSD…SSNS, GQSN…TSLL, and PTAS…SQVP. Residues 1049-1059 are compositionally biased toward polar residues; it reads CTSSPDQQIPA. Thr1215 bears the Phosphothreonine mark. Phosphoserine is present on residues Ser1219 and Ser1269. Residues 1250-1340 are disordered; sequence RRQGPGGEGT…VGPSQGPGGS (91 aa). Residues 1276 to 1288 are compositionally biased toward pro residues; that stretch reads PSPPPQPQPPAPP. The span at 1319–1333 shows a compositional bias: low complexity; sequence HPALLAAPHPGAVGP.

In terms of tissue distribution, expressed in thymus, skeletal muscle, lung, testis, uterus, pancreas and heart and also expressed during embryogenesis.

In terms of biological role, may be a transforming oncogene with exchange activity for CDC42. May be a guanine-nucleotide exchange factor (GEF) for RAC1 and CDC42. Activated by the binding to subunits beta and gamma of the heterotrimeric guanine nucleotide-binding protein (G protein). Involved in the regulation of actin polymerization. The chain is Pleckstrin homology domain-containing family G member 2 (Plekhg2) from Mus musculus (Mouse).